Here is a 341-residue protein sequence, read N- to C-terminus: Tetraacyldisaccharide 4'-kinase (341 aa).

64-71 (AVGGSGKT) serves as a coordination point for ATP.

The protein belongs to the LpxK family.

The enzyme catalyses a lipid A disaccharide + ATP = a lipid IVA + ADP + H(+). It functions in the pathway glycolipid biosynthesis; lipid IV(A) biosynthesis; lipid IV(A) from (3R)-3-hydroxytetradecanoyl-[acyl-carrier-protein] and UDP-N-acetyl-alpha-D-glucosamine: step 6/6. In terms of biological role, transfers the gamma-phosphate of ATP to the 4'-position of a tetraacyldisaccharide 1-phosphate intermediate (termed DS-1-P) to form tetraacyldisaccharide 1,4'-bis-phosphate (lipid IVA). The protein is Tetraacyldisaccharide 4'-kinase of Azoarcus sp. (strain BH72).